The primary structure comprises 584 residues: Myo-inositol transporter 1 (584 aa).

Residues 1–81 (MGIHIPYLTS…TSVMITFNQS (81 aa)) are Cytoplasmic-facing. A Phosphothreonine modification is found at Thr12. Positions 13 to 42 (SQSNVGDAVGNADSVEFNSEHDSPSKRGKI) are disordered. Ser26, Ser31, Ser35, Ser37, and Ser46 each carry phosphoserine. Over residues 30–42 (NSEHDSPSKRGKI) the composition is skewed to basic and acidic residues. The helical transmembrane segment at 82-102 (LSPFIITLTFVASISGFMFGY) threads the bilayer. The Extracellular portion of the chain corresponds to 103 to 129 (DTGYISSALISIGTDLDHKVLTYGEKE). Residues 130-150 (IVTAATSLGALITSIFAGTAA) traverse the membrane as a helical segment. Topologically, residues 151-163 (DIFGRKRCLMGSN) are cytoplasmic. Residues 164–184 (LMFVIGAILQVSAHTFWQMAV) form a helical membrane-spanning segment. Topologically, residues 185-186 (GR) are extracellular. A helical transmembrane segment spans residues 187 to 207 (LIMGFGVGIGSLIAPLFISEI). The Cytoplasmic portion of the chain corresponds to 208 to 215 (APKMIRGR). The chain crosses the membrane as a helical span at residues 216–236 (LTVINSLWLTGGQLVAYGCGA). Over 237–246 (GLNYVNNGWR) the chain is Extracellular. Residues 247–267 (ILVGLSLIPTAVQFTCLCFLP) form a helical membrane-spanning segment. The Cytoplasmic portion of the chain corresponds to 268–349 (DTPRYYVMKG…IGCGLQAIQQ (82 aa)). The helical transmembrane segment at 350–370 (FTGWNSLMYFSGTIFETVGFK) threads the bilayer. Asn371 carries N-linked (GlcNAc...) asparagine glycosylation. Residues 371-376 (NSSAVS) are Extracellular-facing. Residues 377–397 (IIVSGTNFIFTLVAFFSIDKI) form a helical membrane-spanning segment. The Cytoplasmic portion of the chain corresponds to 398–400 (GRR). The chain crosses the membrane as a helical span at residues 401–421 (TILLIGLPGMTMALVVCSIAF). Residues 422 to 441 (HFLGIKFDGAVAVVVSSGFS) are Extracellular-facing. The chain crosses the membrane as a helical span at residues 442 to 462 (SWGIVIIVFIIVFAAFYALGI). At 463–486 (GTVPWQQSELFPQNVRGIGTSYAT) the chain is on the cytoplasmic side. The helical transmembrane segment at 487-507 (ATNWAGSLVIASTFLTMLQNI) threads the bilayer. The Extracellular segment spans residues 508–510 (TPA). Residues 511–531 (GTFAFFAGLSCLSTIFCYFCY) form a helical membrane-spanning segment. Residues 532–584 (PELSGLELEEVQTILKDGFNIKASKALAKKRKQQVARVHELKYEPTQEIIEDI) are Cytoplasmic-facing. A Glycyl lysine isopeptide (Lys-Gly) (interchain with G-Cter in ubiquitin) cross-link involves residue Lys573.

This sequence belongs to the major facilitator superfamily. Sugar transporter (TC 2.A.1.1) family.

The protein resides in the cell membrane. It catalyses the reaction myo-inositol(out) + H(+)(out) = myo-inositol(in) + H(+)(in). Functionally, major transporter for myo-inositol. In Saccharomyces cerevisiae (strain ATCC 204508 / S288c) (Baker's yeast), this protein is Myo-inositol transporter 1 (ITR1).